The chain runs to 129 residues: Small ribosomal subunit protein uS9 (129 aa).

Belongs to the universal ribosomal protein uS9 family.

This is Small ribosomal subunit protein uS9 from Aliarcobacter butzleri (strain RM4018) (Arcobacter butzleri).